We begin with the raw amino-acid sequence, 97 residues long: Co-chaperonin GroES (97 aa).

This sequence belongs to the GroES chaperonin family. Heptamer of 7 subunits arranged in a ring. Interacts with the chaperonin GroEL.

Its subcellular location is the cytoplasm. Its function is as follows. Together with the chaperonin GroEL, plays an essential role in assisting protein folding. The GroEL-GroES system forms a nano-cage that allows encapsulation of the non-native substrate proteins and provides a physical environment optimized to promote and accelerate protein folding. GroES binds to the apical surface of the GroEL ring, thereby capping the opening of the GroEL channel. The polypeptide is Co-chaperonin GroES (Gemmatimonas aurantiaca (strain DSM 14586 / JCM 11422 / NBRC 100505 / T-27)).